The chain runs to 1026 residues: Beta-galactosidase (1026 aa).

E458 acts as the Proton donor in catalysis. E546 acts as the Nucleophile in catalysis.

Belongs to the glycosyl hydrolase 2 family.

The catalysed reaction is Hydrolysis of terminal non-reducing beta-D-galactose residues in beta-D-galactosides.. The chain is Beta-galactosidase (lacZ) from Streptococcus thermophilus.